Reading from the N-terminus, the 1224-residue chain is WD repeat-containing protein 11 (1224 aa).

WD repeat units lie at residues 59–108 and 111–154; these read KHKA…AQCE and EHAK…KLWK. Phosphoserine is present on residues Ser-205 and Ser-209. The stretch at 354-393 is one WD 3 repeat; the sequence is KTVRPFSMVCCPVNENAAALVVSDGRVMIWELKSAVCNRN. 2 positions are modified to phosphoserine: Ser-402 and Ser-406. 6 WD repeats span residues 471–510, 566–605, 708–745, 747–787, 793–831, and 893–940; these read RMCP…LHKE, NDES…LLRE, GSMG…SRGI, THRS…MVSS, NVTF…ACFR, and SLSN…HSLS.

Component of the complex WDR11 composed of C17orf75, FAM91A1 and WDR11; FAM91A1 and WDR11 are required for proper location of the complex. Interacts (via the N-terminal and the central portion of the protein) with EMX1. Interacts with GLI3; the interaction associateS EMX1 with GLI3. Interacts with TBC1D23; this interaction may be indirect and recruits TBC1D23 to AP-1-derived vesicles. In terms of tissue distribution, ubiquitous.

The protein resides in the cytoplasm. It is found in the cytoskeleton. It localises to the cilium basal body. The protein localises to the nucleus. Its subcellular location is the cilium axoneme. The protein resides in the cytoplasmic vesicle. It is found in the golgi apparatus. It localises to the trans-Golgi network. Its function is as follows. Involved in the Hedgehog (Hh) signaling pathway, is essential for normal ciliogenesis. Regulates the proteolytic processing of GLI3 and cooperates with the transcription factor EMX1 in the induction of downstream Hh pathway gene expression and gonadotropin-releasing hormone production. WDR11 complex facilitates the tethering of Adaptor protein-1 complex (AP-1)-derived vesicles. WDR11 complex acts together with TBC1D23 to facilitate the golgin-mediated capture of vesicles generated using AP-1. This is WD repeat-containing protein 11 (WDR11) from Homo sapiens (Human).